Reading from the N-terminus, the 1490-residue chain is Leucine-rich repeat-containing protein 7 (1490 aa).

17 LRR repeats span residues 23–44, 47–68, 70–91, 93–114, 116–137, 139–161, 162–183, 185–206, 208–229, 231–253, 254–275, 277–298, 300–321, 323–344, 346–367, 369–391, and 392–413; these read IISVLDYSHCSLQQVPKEVFNF, TLEELYLDANQIEELPKQLFNC, ALRKLSIPDNDLSSLPTSIASL, NLKELDISKNGVQEFPENIKCC, CLTIIEASVNPISKLPDGFTQL, NLTQLYLNDAFLEFLPANFGRLV, KLRILELRENHLKTLPKSMHKL, QLERLDLGNNEFSELPEVLDQI, NLRELWMDNNALQVLPGSIGKL, MLVYLDMSKNRIETVDMDISGCE, ALEDLLLSSNMLQQLPDSIGLL, KLTTLKVDDNQLTMLPNTIGNL, LLEEFDCSCNELESLPPTIGYL, SLRTLAVDENFLPELPREIGSC, NVTVMSLRSNKLEFLPEEIGQM, RLRVLNLSDNRLKNLPFSFTKLK, and ELAALWLSDNQSKALIPLQTEA. Residues serine 439, serine 441, and serine 443 each carry the phosphoserine modification. Basic and acidic residues predominate over residues 663 to 676; it reads KKESTDESEVDKTH. Disordered regions lie at residues 663–704, 785–807, and 822–899; these read KKES…NTRM, AGENANNNPLLSSKARSVPAHGR, and ELEQ…YHDP. Positions 677–686 are enriched in polar residues; the sequence is CLNNSVSSGT. Positions 687-700 are enriched in low complexity; it reads YSDYSPSQASSASS. The residue at position 831 (threonine 831) is a Phosphothreonine. A Phosphoserine modification is found at serine 850. Positions 859–871 are enriched in low complexity; the sequence is PSKLETTPTTSPL. Threonine 865 bears the Phosphothreonine mark. Phosphoserine is present on serine 869. Residues 872 to 882 are compositionally biased toward basic and acidic residues; it reads PERKDHMKEPT. Phosphoserine occurs at positions 947, 949, and 1118. A compositionally biased stretch (basic and acidic residues) spans 1134–1144; it reads PHELPPGDRYG. 2 disordered regions span residues 1134-1158 and 1196-1218; these read PHELPPGDRYGRATYRGGLEGQSSI and QRRPLSARSYSTESYGASQTRPV. Arginine 1149 is subject to Omega-N-methylarginine. Residues 1196–1217 are compositionally biased toward polar residues; sequence QRRPLSARSYSTESYGASQTRP. Serine 1233 bears the Phosphoserine mark. Disordered stretches follow at residues 1238–1265 and 1282–1312; these read GNYGDKTSDNSDIKTRPTPVKGEESCGK and RLDRTPSQQSNILDNGQEDVSPSGQWNPYPL. Basic and acidic residues predominate over residues 1243–1263; sequence KTSDNSDIKTRPTPVKGEESC. The span at 1286 to 1307 shows a compositional bias: polar residues; sequence TPSQQSNILDNGQEDVSPSGQW. Serine 1288 and serine 1392 each carry phosphoserine. One can recognise a PDZ domain in the interval 1398–1488; that stretch reads EQFCVRIEKN…TVDLVIQREL (91 aa).

The protein belongs to the LAP (LRR and PDZ) protein family. In terms of assembly, interacts with CNKSR2 and DLG4. Interacts with CTNND2/Catenin delta-2. Forms a complex with N-cadherin through CTNND2. Interacts with CAMK2A. Expressed in brain (at protein level).

It is found in the cytoplasm. The protein localises to the postsynaptic density. Functionally, required for normal synaptic spine architecture and function. Necessary for DISC1 and GRM5 localization to postsynaptic density complexes and for both N-methyl D-aspartate receptor-dependent and metabotropic glutamate receptor-dependent long term depression. The sequence is that of Leucine-rich repeat-containing protein 7 (Lrrc7) from Mus musculus (Mouse).